An 858-amino-acid polypeptide reads, in one-letter code: RNA-directed RNA polymerase 2a (858 aa).

One can recognise a RdRp catalytic domain in the interval 511–624; sequence KYCLEIDLSK…FSVLPPVGDP (114 aa). The segment at 775 to 830 is disordered; sequence RKKKDGIERRRNDKRRTPTSPHGGGEETETKVSQEESTGTMLQKSQRESAFKSQTI. Positions 798–808 are enriched in basic and acidic residues; that stretch reads GGEETETKVSQ. A compositionally biased stretch (polar residues) spans 809-818; it reads EESTGTMLQK.

This sequence belongs to the ssRNA positive-strand viruses RNA-directed RNA polymerase family. In terms of assembly, interacts with replication protein 1a.

It carries out the reaction RNA(n) + a ribonucleoside 5'-triphosphate = RNA(n+1) + diphosphate. RNA-dependent RNA polymerase which replicates the viral genome composed of 3 RNA segments, RNA1, RNA2 and RNA3. The sequence is that of RNA-directed RNA polymerase 2a from Cucumber mosaic virus (strain Ixora) (CMV).